The chain runs to 513 residues: ATP synthase subunit alpha (513 aa).

169 to 176 (GDRQIGKT) serves as a coordination point for ATP.

The protein belongs to the ATPase alpha/beta chains family. F-type ATPases have 2 components, CF(1) - the catalytic core - and CF(0) - the membrane proton channel. CF(1) has five subunits: alpha(3), beta(3), gamma(1), delta(1), epsilon(1). CF(0) has three main subunits: a(1), b(2) and c(9-12). The alpha and beta chains form an alternating ring which encloses part of the gamma chain. CF(1) is attached to CF(0) by a central stalk formed by the gamma and epsilon chains, while a peripheral stalk is formed by the delta and b chains.

Its subcellular location is the cell inner membrane. It carries out the reaction ATP + H2O + 4 H(+)(in) = ADP + phosphate + 5 H(+)(out). In terms of biological role, produces ATP from ADP in the presence of a proton gradient across the membrane. The alpha chain is a regulatory subunit. This is ATP synthase subunit alpha from Shewanella piezotolerans (strain WP3 / JCM 13877).